The primary structure comprises 94 residues: Aspartyl/glutamyl-tRNA(Asn/Gln) amidotransferase subunit C (94 aa).

Belongs to the GatC family. As to quaternary structure, heterotrimer of A, B and C subunits.

It carries out the reaction L-glutamyl-tRNA(Gln) + L-glutamine + ATP + H2O = L-glutaminyl-tRNA(Gln) + L-glutamate + ADP + phosphate + H(+). The catalysed reaction is L-aspartyl-tRNA(Asn) + L-glutamine + ATP + H2O = L-asparaginyl-tRNA(Asn) + L-glutamate + ADP + phosphate + 2 H(+). In terms of biological role, allows the formation of correctly charged Asn-tRNA(Asn) or Gln-tRNA(Gln) through the transamidation of misacylated Asp-tRNA(Asn) or Glu-tRNA(Gln) in organisms which lack either or both of asparaginyl-tRNA or glutaminyl-tRNA synthetases. The reaction takes place in the presence of glutamine and ATP through an activated phospho-Asp-tRNA(Asn) or phospho-Glu-tRNA(Gln). This is Aspartyl/glutamyl-tRNA(Asn/Gln) amidotransferase subunit C from Opitutus terrae (strain DSM 11246 / JCM 15787 / PB90-1).